The sequence spans 461 residues: Serine carboxypeptidase-like 51 (461 aa).

The N-terminal stretch at 1 to 20 is a signal peptide; that stretch reads MKTTVVYLVILCLIVSCTNG. N-linked (GlcNAc...) asparagine glycans are attached at residues Asn-99 and Asn-152. Ser-166 is an active-site residue. N-linked (GlcNAc...) asparagine glycosylation is present at Asn-340. Catalysis depends on residues Asp-379 and His-438.

The protein belongs to the peptidase S10 family. In terms of tissue distribution, expressed in seedlings, roots, flowers and siliques.

The protein resides in the secreted. Functionally, probable carboxypeptidase. The sequence is that of Serine carboxypeptidase-like 51 (SCPL51) from Arabidopsis thaliana (Mouse-ear cress).